Here is a 277-residue protein sequence, read N- to C-terminus: NADPH-dependent 7-cyano-7-deazaguanine reductase (277 aa).

86–88 (IES) is a substrate binding site. Residue 88–89 (SK) participates in NADPH binding. The Thioimide intermediate role is filled by Cys185. Asp192 serves as the catalytic Proton donor. 224 to 225 (HE) provides a ligand contact to substrate. 253–254 (RG) is an NADPH binding site.

It belongs to the GTP cyclohydrolase I family. QueF type 2 subfamily. As to quaternary structure, homodimer.

Its subcellular location is the cytoplasm. The enzyme catalyses 7-aminomethyl-7-carbaguanine + 2 NADP(+) = 7-cyano-7-deazaguanine + 2 NADPH + 3 H(+). It functions in the pathway tRNA modification; tRNA-queuosine biosynthesis. Its function is as follows. Catalyzes the NADPH-dependent reduction of 7-cyano-7-deazaguanine (preQ0) to 7-aminomethyl-7-deazaguanine (preQ1). This is NADPH-dependent 7-cyano-7-deazaguanine reductase from Hydrogenovibrio crunogenus (strain DSM 25203 / XCL-2) (Thiomicrospira crunogena).